The sequence spans 244 residues: ATP synthase subunit 4, mitochondrial (244 aa).

The N-terminal 36 residues, 1–36 (MSSKLFCLRSFPSVQRTAWQRLVLPSTRKFSLTPTT), are a transit peptide targeting the mitochondrion.

This sequence belongs to the eukaryotic ATPase B chain family. F-type ATPases have 2 components, CF(1) - the catalytic core - and CF(0) - the membrane proton channel. In yeast, the dimeric form of ATP synthase consists of 17 polypeptides: alpha, beta, gamma, delta, epsilon, 4 (B), 5 (OSCP), 6 (A), 8, 9 (C), d, E (Tim11), f, g, h, i/j and k.

Its subcellular location is the mitochondrion. The protein localises to the mitochondrion inner membrane. Its function is as follows. Mitochondrial membrane ATP synthase (F(1)F(0) ATP synthase or Complex V) produces ATP from ADP in the presence of a proton gradient across the membrane which is generated by electron transport complexes of the respiratory chain. F-type ATPases consist of two structural domains, F(1) - containing the extramembraneous catalytic core, and F(0) - containing the membrane proton channel, linked together by a central stalk and a peripheral stalk. During catalysis, ATP synthesis in the catalytic domain of F(1) is coupled via a rotary mechanism of the central stalk subunits to proton translocation. Part of the complex F(0) domain and the peripheric stalk, which acts as a stator to hold the catalytic alpha(3)beta(3) subcomplex and subunit a/ATP6 static relative to the rotary elements. The chain is ATP synthase subunit 4, mitochondrial (atp4) from Schizosaccharomyces pombe (strain 972 / ATCC 24843) (Fission yeast).